The sequence spans 466 residues: Amidase (466 aa).

Catalysis depends on charge relay system residues Lys79 and Ser148. Residues 128–152 (YGRITPKSRNPRDPGRTPGGSSGGS) are disordered. Ser172 acts as the Acyl-ester intermediate in catalysis.

Belongs to the amidase family.

It carries out the reaction a monocarboxylic acid amide + H2O = a monocarboxylate + NH4(+). The chain is Amidase from Pseudomonas putida (Arthrobacter siderocapsulatus).